The sequence spans 241 residues: Uridylate kinase (241 aa).

ATP is bound at residue 15–18 (KLSG). The interval 23–28 (GSEGFG) is involved in allosteric activation by GTP. Glycine 57 lines the UMP pocket. ATP is bound by residues glycine 58 and arginine 62. UMP-binding positions include aspartate 77 and 138 to 145 (TGNPFCTT). ATP is bound by residues threonine 165, tyrosine 171, and aspartate 174.

It belongs to the UMP kinase family. Homohexamer.

The protein localises to the cytoplasm. The catalysed reaction is UMP + ATP = UDP + ADP. It functions in the pathway pyrimidine metabolism; CTP biosynthesis via de novo pathway; UDP from UMP (UMPK route): step 1/1. Allosterically activated by GTP. Inhibited by UTP. Functionally, catalyzes the reversible phosphorylation of UMP to UDP. This is Uridylate kinase from Shewanella amazonensis (strain ATCC BAA-1098 / SB2B).